Consider the following 215-residue polypeptide: UPF0502 protein YceH (215 aa).

Lys-80 is subject to N6-acetyllysine.

Belongs to the UPF0502 family.

The chain is UPF0502 protein YceH from Escherichia coli O7:K1 (strain IAI39 / ExPEC).